The sequence spans 582 residues: NudC domain-containing protein 1 (582 aa).

Serine 7 is modified (phosphoserine). Residues 272–360 form the CS domain; it reads KVEPLYYWQQ…NEGLMWPELV (89 aa). Serine 387 bears the Phosphoserine mark.

The protein localises to the cytoplasm. Its subcellular location is the nucleus. The sequence is that of NudC domain-containing protein 1 from Mus musculus (Mouse).